A 393-amino-acid polypeptide reads, in one-letter code: Bifunctional enzyme Fae/Hps (393 aa).

The tract at residues 1-161 (MYLIGEALVG…HEKDRAAHAV (161 aa)) is formaldehyde-activating enzyme. H17 acts as the Proton donor in catalysis. Substrate-binding residues include D19, L48, K66, T68, and Q83. Residues 162–393 (MGFKVQRLWD…IDQFRIMTDF (232 aa)) are 3-hexulose-6-phosphate synthase.

It in the N-terminal section; belongs to the formaldehyde-activating enzyme family. In the C-terminal section; belongs to the HPS/KGPDC family. HPS subfamily.

It carries out the reaction 5,6,7,8-tetrahydromethanopterin + formaldehyde = 5,10-methylenetetrahydromethanopterin + H2O. It catalyses the reaction D-ribulose 5-phosphate + formaldehyde = D-arabino-hex-3-ulose 6-phosphate. It participates in carbohydrate biosynthesis; D-ribose 5-phosphate biosynthesis. In terms of biological role, catalyzes the condensation of formaldehyde with tetrahydromethanopterin (H(4)MPT) to 5,10-methylenetetrahydromethanopterin. Its function is as follows. Catalyzes the reversible formation of ribulose-5-phosphate and formaldehyde from 3-hexulose-6-phosphate. The sequence is that of Bifunctional enzyme Fae/Hps from Methanoculleus marisnigri (strain ATCC 35101 / DSM 1498 / JR1).